An 89-amino-acid chain; its full sequence is Small ribosomal subunit protein uS14 (89 aa).

It belongs to the universal ribosomal protein uS14 family. In terms of assembly, part of the 30S ribosomal subunit. Contacts proteins S3 and S10.

Its function is as follows. Binds 16S rRNA, required for the assembly of 30S particles and may also be responsible for determining the conformation of the 16S rRNA at the A site. The chain is Small ribosomal subunit protein uS14 from Chlorobium limicola (strain DSM 245 / NBRC 103803 / 6330).